The primary structure comprises 269 residues: MDQSAAKRMTITTLQNACEQGEKIAVLTCYDATFAAVLEEAGVDILLVGDSLGNVVQGKSSTLPVTLDEMIYHVRCVERGTHRVFIMADMPFGTFQVSPQEAFGNAVRLMAAGAQMVKIEGGQHMAETVEFLSCRGIPVCAHIGLMPQFVHQLGGYRVQGKTPNDARQLREDALLLQEAGAAMLLMELIPAVLGEEITRLLSIPTIGIGAGAACSGQVLVLHDMLGISSGTLPRFVRNFMMDADSIQTAVSNYVEAVKLGAFPAYEHTF.

Mg(2+) is bound by residues D50 and D89. 3-methyl-2-oxobutanoate-binding positions include D50–S51, D89, and K118. E120 provides a ligand contact to Mg(2+). E187 functions as the Proton acceptor in the catalytic mechanism.

Belongs to the PanB family. In terms of assembly, homodecamer; pentamer of dimers. The cofactor is Mg(2+).

The protein resides in the cytoplasm. It catalyses the reaction 3-methyl-2-oxobutanoate + (6R)-5,10-methylene-5,6,7,8-tetrahydrofolate + H2O = 2-dehydropantoate + (6S)-5,6,7,8-tetrahydrofolate. It participates in cofactor biosynthesis; (R)-pantothenate biosynthesis; (R)-pantoate from 3-methyl-2-oxobutanoate: step 1/2. Functionally, catalyzes the reversible reaction in which hydroxymethyl group from 5,10-methylenetetrahydrofolate is transferred onto alpha-ketoisovalerate to form ketopantoate. This Nitrosomonas europaea (strain ATCC 19718 / CIP 103999 / KCTC 2705 / NBRC 14298) protein is 3-methyl-2-oxobutanoate hydroxymethyltransferase.